Consider the following 597-residue polypeptide: MERPAPLAVLPFSDPAHALSLLRGLSQLRAERKFLDVTLEAAGGRDFPAHRAVLAAASPYFRAMFAGQLRESRAERVRLHGVPPDMLQLLLDFSYTGRVAVSGDNAEPLLRAADLLQFPAVKEACGAFLQQQLDLTNCLDMQDFAEAFSCAGLASAAQRFILRHVGELGAEQLERLPLARLLRYLRDDGLCVPKEEAAYQLALRWVRADPPRRAAHWPQLLESVRLPFVRRFYLLAHVEAEPLVARCPPCLRLLREARDFQAARYDRHDRGPCPRMRPRPSTGLAEILVLVGGCDQDCDELVTVDCYNPQTGQWRYLAEFPDHLGGGYSIVALGNDIYVTGGSDGSRLYDCVWRYNSSVNEWTEVAPMLKAREYHSSSVLDGLLYVVAADSTERYDHTTDSWEALQPMTYPMDNCSTTACRGRLYAIGSLAGKETMVMQCYHPDMDLWSLVDCGQLPPWSFAPKTVTLNGLMYFIRDDSAEVDVYNPTKNEWDKIPSMNQVHVGGSLAVLGGKLYVSGGYDNTFELSDVVEAYDPETRAWSVVGRLPEPTFWHGSVSIFRQFMPQTPLGGRGFELDGGSSDMDVGQPRPPQNPAELH.

A BTB domain is found at 35 to 103; the sequence is LDVTLEAAGG…SYTGRVAVSG (69 aa). In terms of domain architecture, BACK spans 138 to 239; that stretch reads CLDMQDFAEA…RRFYLLAHVE (102 aa). Kelch repeat units follow at residues 287–335, 336–382, 384–422, 424–463, 464–512, and 513–560; these read ILVL…ALGN, DIYV…VLDG, LYVVAADSTERYDHTTDSWEALQPMTYPMDNCSTTACRG, LYAIGSLAGKETMVMQCYHPDMDLWSLVDCGQLPPWSFAP, KTVT…VLGG, and KLYV…SIFR. A disordered region spans residues 570 to 597; that stretch reads GRGFELDGGSSDMDVGQPRPPQNPAELH. Residues 587 to 597 are compositionally biased toward pro residues; that stretch reads PRPPQNPAELH.

In terms of assembly, component of the BCR(KLHL21) E3 ubiquitin ligase complex, at least composed of CUL3, KLHL21 and RBX1.

The protein resides in the cytoplasm. The protein localises to the cytoskeleton. It localises to the spindle. Its pathway is protein modification; protein ubiquitination. Substrate-specific adapter of a BCR (BTB-CUL3-RBX1) E3 ubiquitin-protein ligase complex required for efficient chromosome alignment and cytokinesis. The BCR(KLHL21) E3 ubiquitin ligase complex regulates localization of the chromosomal passenger complex (CPC) from chromosomes to the spindle midzone in anaphase and mediates the ubiquitination of AURKB. Ubiquitination of AURKB by BCR(KLHL21) E3 ubiquitin ligase complex may not lead to its degradation by the proteasome. The protein is Kelch-like protein 21 (KLHL21) of Bos taurus (Bovine).